A 361-amino-acid chain; its full sequence is Spermidine/putrescine import ATP-binding protein PotA (361 aa).

The ABC transporter domain occupies 4–234 (LEIKNVVKRF…PKNRFVADFL (231 aa)). Position 36 to 43 (36 to 43 (GPSGCGKT)) interacts with ATP.

The protein belongs to the ABC transporter superfamily. Spermidine/putrescine importer (TC 3.A.1.11.1) family. The complex is composed of two ATP-binding proteins (PotA), two transmembrane proteins (PotB and PotC) and a solute-binding protein (PotD).

Its subcellular location is the cell inner membrane. The catalysed reaction is ATP + H2O + polyamine-[polyamine-binding protein]Side 1 = ADP + phosphate + polyamineSide 2 + [polyamine-binding protein]Side 1.. Functionally, part of the ABC transporter complex PotABCD involved in spermidine/putrescine import. Responsible for energy coupling to the transport system. The chain is Spermidine/putrescine import ATP-binding protein PotA from Chromobacterium violaceum (strain ATCC 12472 / DSM 30191 / JCM 1249 / CCUG 213 / NBRC 12614 / NCIMB 9131 / NCTC 9757 / MK).